The sequence spans 152 residues: Endoribonuclease YbeY (152 aa).

Zn(2+) contacts are provided by histidine 113, histidine 117, and histidine 123.

It belongs to the endoribonuclease YbeY family. Zn(2+) serves as cofactor.

It is found in the cytoplasm. In terms of biological role, single strand-specific metallo-endoribonuclease involved in late-stage 70S ribosome quality control and in maturation of the 3' terminus of the 16S rRNA. The protein is Endoribonuclease YbeY of Wolbachia pipientis subsp. Culex pipiens (strain wPip).